The primary structure comprises 333 residues: Casein kinase II subunit alpha-3 (333 aa).

Residues 34–319 form the Protein kinase domain; it reads YEVVRKVGRG…AREAMDHPYF (286 aa). Residues 40 to 48 and lysine 63 contribute to the ATP site; that span reads VGRGKYSEV. The active-site Proton acceptor is the aspartate 151.

This sequence belongs to the protein kinase superfamily. Ser/Thr protein kinase family. CK2 subfamily. In terms of assembly, heterotetramer of two catalytic alpha subunits and two regulatory beta subunits.

Its subcellular location is the nucleus. The protein localises to the nucleolus. It is found in the cytoplasm. It catalyses the reaction L-seryl-[protein] + ATP = O-phospho-L-seryl-[protein] + ADP + H(+). The catalysed reaction is L-threonyl-[protein] + ATP = O-phospho-L-threonyl-[protein] + ADP + H(+). Casein kinases are operationally defined by their preferential utilization of acidic proteins such as caseins as substrates. The alpha chain contains the catalytic site. The tetrameric holoenzyme CK2 is composed of two alpha and two beta subunits. Acts as a circadian clock component that maintains the correct period length through phosphorylation of CCA1. This chain is Casein kinase II subunit alpha-3, found in Arabidopsis thaliana (Mouse-ear cress).